We begin with the raw amino-acid sequence, 111 residues long: uncharacterized protein (111 aa).

Residues 18–41 (FFYFFFISFYTLWIVFFLLHLSFF) form a helical membrane-spanning segment.

It localises to the membrane. This is an uncharacterized protein from Saccharomyces cerevisiae (strain ATCC 204508 / S288c) (Baker's yeast).